We begin with the raw amino-acid sequence, 760 residues long: General transcription and DNA repair factor IIH helicase subunit XPD (760 aa).

The Helicase ATP-binding domain occupies Gly7–Asp283. Met42–Thr49 is a binding site for ATP. The [4Fe-4S] cluster site is built by Cys116, Cys134, Cys155, and Cys190. The short motif at Asp234–His237 is the DEAH box element. The interval Met438 to Leu637 is mediates interaction with MMS19.

This sequence belongs to the helicase family. RAD3/XPD subfamily. Component of the 7-subunit TFIIH core complex composed of XPB/ERCC3, XPD/ERCC2, GTF2H1, GTF2H2, GTF2H3, GTF2H4 and GTF2H5, which is active in NER. The core complex associates with the 3-subunit CDK-activating kinase (CAK) module composed of CCNH/cyclin H, CDK7 and MNAT1 to form the 10-subunit holoenzyme (holo-TFIIH) active in transcription. The interaction with GTF2H2 results in the stimulation of the 5'--&gt;3' helicase activity. Component of the MMXD complex, which includes CIAO1, ERCC2, CIAO2B, MMS19 and SLC25A5. Interacts with CIAO1 and CIAO2B; the interaction WITH CIAO2B is direct. Interacts with ATF7IP. Interacts directly with MMS19. Part of TBP-based Pol II pre-initiation complex (PIC), in which Pol II core assembles with general transcription factors and other specific initiation factors including GTF2E1, GTF2E2, GTF2F1, GTF2F2, TCEA1, ERCC2, ERCC3, GTF2H2, GTF2H3, GTF2H4, GTF2H5, GTF2A1, GTF2A2, GTF2B and TBP; this large multi-subunit PIC complex mediates DNA unwinding and targets Pol II core to the transcription start site where the first phosphodiester bond forms. Mg(2+) is required as a cofactor. [4Fe-4S] cluster serves as cofactor. Post-translationally, ISGylated.

Its subcellular location is the nucleus. It is found in the cytoplasm. The protein localises to the cytoskeleton. The protein resides in the spindle. The catalysed reaction is Couples ATP hydrolysis with the unwinding of duplex DNA at the replication fork by translocating in the 5'-3' direction. This creates two antiparallel DNA single strands (ssDNA). The leading ssDNA polymer is the template for DNA polymerase III holoenzyme which synthesizes a continuous strand.. It carries out the reaction ATP + H2O = ADP + phosphate + H(+). Functionally, ATP-dependent 5'-3' DNA helicase, component of the general transcription and DNA repair factor IIH (TFIIH) core complex, which is involved in general and transcription-coupled nucleotide excision repair (NER) of damaged DNA and, when complexed to CDK-activating kinase (CAK), involved in transcription by RNA polymerase II. In NER, TFIIH acts by opening DNA around the lesion to allow the excision of the damaged oligonucleotide and its replacement by a new DNA fragment. The ATP-dependent helicase activity of XPD/ERCC2 is required for DNA opening. In transcription, TFIIH has an essential role in transcription initiation. When the pre-initiation complex (PIC) has been established, TFIIH is required for promoter opening and promoter escape. Phosphorylation of the C-terminal tail (CTD) of the largest subunit of RNA polymerase II by the kinase module CAK controls the initiation of transcription. XPD/ERCC2 acts by forming a bridge between CAK and the core-TFIIH complex. Involved in the regulation of vitamin-D receptor activity. As part of the mitotic spindle-associated MMXD complex it plays a role in chromosome segregation. Might have a role in aging process and could play a causative role in the generation of skin cancers. In Mus musculus (Mouse), this protein is General transcription and DNA repair factor IIH helicase subunit XPD (Ercc2).